The chain runs to 324 residues: UPF0158 protein CPn_0518/CP_0235/CPj0518/CpB0539 (324 aa).

It belongs to the UPF0158 family.

The chain is UPF0158 protein CPn_0518/CP_0235/CPj0518/CpB0539 from Chlamydia pneumoniae (Chlamydophila pneumoniae).